The following is a 507-amino-acid chain: Glycerol kinase (507 aa).

T12 is a binding site for ADP. 3 residues coordinate ATP: T12, T13, and S14. T12 lines the sn-glycerol 3-phosphate pocket. R16 serves as a coordination point for ADP. Sn-glycerol 3-phosphate is bound by residues R82, E83, Y134, and D250. 5 residues coordinate glycerol: R82, E83, Y134, D250, and Q251. Residues T272 and G316 each contribute to the ADP site. ATP is bound by residues T272, G316, Q320, and G417. G417 and N421 together coordinate ADP.

Belongs to the FGGY kinase family.

The catalysed reaction is glycerol + ATP = sn-glycerol 3-phosphate + ADP + H(+). It functions in the pathway polyol metabolism; glycerol degradation via glycerol kinase pathway; sn-glycerol 3-phosphate from glycerol: step 1/1. Its activity is regulated as follows. Inhibited by fructose 1,6-bisphosphate (FBP). Key enzyme in the regulation of glycerol uptake and metabolism. Catalyzes the phosphorylation of glycerol to yield sn-glycerol 3-phosphate. This chain is Glycerol kinase, found in Beijerinckia indica subsp. indica (strain ATCC 9039 / DSM 1715 / NCIMB 8712).